The chain runs to 430 residues: Serine--tRNA ligase (430 aa).

Threonine 231–glutamate 233 is an L-serine binding site. Arginine 262 to glutamate 264 lines the ATP pocket. Glutamate 285 provides a ligand contact to L-serine. Position 349-352 (glutamate 349–serine 352) interacts with ATP. L-serine is bound at residue serine 385.

It belongs to the class-II aminoacyl-tRNA synthetase family. Type-1 seryl-tRNA synthetase subfamily. In terms of assembly, homodimer. The tRNA molecule binds across the dimer.

Its subcellular location is the cytoplasm. It carries out the reaction tRNA(Ser) + L-serine + ATP = L-seryl-tRNA(Ser) + AMP + diphosphate + H(+). It catalyses the reaction tRNA(Sec) + L-serine + ATP = L-seryl-tRNA(Sec) + AMP + diphosphate + H(+). It functions in the pathway aminoacyl-tRNA biosynthesis; selenocysteinyl-tRNA(Sec) biosynthesis; L-seryl-tRNA(Sec) from L-serine and tRNA(Sec): step 1/1. Its function is as follows. Catalyzes the attachment of serine to tRNA(Ser). Is also able to aminoacylate tRNA(Sec) with serine, to form the misacylated tRNA L-seryl-tRNA(Sec), which will be further converted into selenocysteinyl-tRNA(Sec). In Ruegeria pomeroyi (strain ATCC 700808 / DSM 15171 / DSS-3) (Silicibacter pomeroyi), this protein is Serine--tRNA ligase.